Consider the following 90-residue polypeptide: UPF0335 protein RPD_1405 (90 aa).

The protein belongs to the UPF0335 family.

The protein is UPF0335 protein RPD_1405 of Rhodopseudomonas palustris (strain BisB5).